The sequence spans 557 residues: Vanadium-dependent bromoperoxidase (557 aa).

A Pyrrolidone carboxylic acid modification is found at glutamine 1. The disordered stretch occupies residues 1–22 (QTCSTSDDADDPTPPNERDDEA). Cysteine 77 and cysteine 86 are joined by a disulfide. Residues lysine 341 and arginine 349 each contribute to the vanadate site. Residue histidine 411 is part of the active site. Vanadate is bound by residues serine 416, glycine 417, and histidine 418. The active site involves histidine 418. Cysteine 441 and cysteine 462 are joined by a disulfide. Positions 480 and 486 each coordinate vanadate. Cysteine 544 and cysteine 555 are joined by a disulfide.

It belongs to the vanadium-dependent haloperoxidase family. As to quaternary structure, homodimer; disulfide-linked. Vanadate serves as cofactor.

It carries out the reaction RH + Br(-) + H2O2 = RBr + 2 H2O.. Its function is as follows. Catalyzes the halogenation of organic substrates in the presence of hydrogen peroxide. The chain is Vanadium-dependent bromoperoxidase from Ascophyllum nodosum (Knotted wrack).